We begin with the raw amino-acid sequence, 247 residues long: 2-dehydro-3-deoxy-phosphogluconate aldolase (247 aa).

The protein belongs to the DagF family.

It carries out the reaction 2-dehydro-3-deoxy-6-phospho-D-gluconate = D-glyceraldehyde 3-phosphate + pyruvate. In terms of biological role, involved in the catabolism of D-glucosaminate. Catalyzes the conversion of keto-3-deoxygluconate 6-phosphate (KDGP) to yield pyruvate and glyceraldehyde-3-phosphate. The protein is 2-dehydro-3-deoxy-phosphogluconate aldolase of Salmonella typhimurium (strain 14028s / SGSC 2262).